Here is a 362-residue protein sequence, read N- to C-terminus: uncharacterized protein (362 aa).

7 helical membrane-spanning segments follow: residues 32–52, 75–95, 106–126, 148–168, 176–196, 287–307, and 329–349; these read GAGW…VGAV, FVDA…ADGV, VVML…DLSV, AAVG…GVGA, GVGT…VVVV, VFAL…PVAM, and VLVA…CGMF.

The protein belongs to the peptidase S58 family.

It localises to the cell membrane. In terms of biological role, aminopeptidase. This is an uncharacterized protein from Mycobacterium leprae (strain TN).